The primary structure comprises 263 residues: Tryptophan synthase alpha chain (263 aa).

Catalysis depends on proton acceptor residues Glu41 and Asp52.

It belongs to the TrpA family. In terms of assembly, tetramer of two alpha and two beta chains.

The enzyme catalyses (1S,2R)-1-C-(indol-3-yl)glycerol 3-phosphate + L-serine = D-glyceraldehyde 3-phosphate + L-tryptophan + H2O. The protein operates within amino-acid biosynthesis; L-tryptophan biosynthesis; L-tryptophan from chorismate: step 5/5. Functionally, the alpha subunit is responsible for the aldol cleavage of indoleglycerol phosphate to indole and glyceraldehyde 3-phosphate. This chain is Tryptophan synthase alpha chain, found in Geobacillus sp. (strain WCH70).